The chain runs to 230 residues: Ribosome biogenesis protein SLX9 homolog (230 aa).

Basic residues predominate over residues 1–11; the sequence is MGKVRGLRARV. Disordered regions lie at residues 1–42 and 155–187; these read MGKV…SAAG and LGLEAGSRRQARSRESNKPRPSELSRMSAAQRQ. Over residues 25 to 38 the composition is skewed to pro residues; the sequence is GPAPPAPEATPPPA. T34 is subject to Phosphothreonine. Over residues 166 to 177 the composition is skewed to basic and acidic residues; that stretch reads RSRESNKPRPSE. Phosphoserine is present on S203.

This sequence belongs to the SLX9 family. In terms of tissue distribution, not detected in any tested tissue.

Its subcellular location is the nucleus. It is found in the nucleolus. May be involved in ribosome biogenesis. The polypeptide is Ribosome biogenesis protein SLX9 homolog (Homo sapiens (Human)).